The primary structure comprises 501 residues: Lycopene beta cyclase, chloroplastic (501 aa).

The N-terminal 48 residues, 1-48 (MDTLLKTPNKLDFFIPQFHGFERLCSNNPYHSRVRLGVKKRAIKIVSS), are a transit peptide targeting the chloroplast. An N-acetylvaline modification is found at V49. 85–113 (LAIVGGGPAGLAVAQQVSEAGLSVCSIDP) contacts NAD(+).

The protein belongs to the lycopene cyclase family.

Its subcellular location is the plastid. The protein localises to the chloroplast. The enzyme catalyses a carotenoid psi-end group = a carotenoid beta-end derivative. It functions in the pathway carotenoid biosynthesis; beta-carotene biosynthesis. The protein operates within carotenoid biosynthesis; beta-zeacarotene biosynthesis. Involved in carotenoid biosynthesis. Catalyzes the double cyclization reaction which converts lycopene to beta-carotene and neurosporene to beta-zeacarotene. Major lycopene beta-cyclase that does not seem to be involved in neoxanthin synthesis. Involved in salt tolerance improvement by increasing synthesis of carotenoids, which impairs reactive oxygen species (ROS) and protects the photosynthetic system under salt stress. The polypeptide is Lycopene beta cyclase, chloroplastic (Arabidopsis thaliana (Mouse-ear cress)).